A 136-amino-acid chain; its full sequence is Protein NrdI (136 aa).

Belongs to the NrdI family.

Its function is as follows. Probably involved in ribonucleotide reductase function. The protein is Protein NrdI of Salmonella arizonae (strain ATCC BAA-731 / CDC346-86 / RSK2980).